The chain runs to 90 residues: Long neurotoxin 7 (90 aa).

Positions 1 to 21 are cleaved as a signal peptide; it reads MKTLLLTLVLVTIMCLDLGYT. Cystine bridges form between Cys-24–Cys-41, Cys-35–Cys-62, Cys-47–Cys-51, Cys-66–Cys-77, and Cys-78–Cys-83.

The protein belongs to the three-finger toxin family. Long-chain subfamily. Type II alpha-neurotoxin sub-subfamily. Expressed by the venom gland.

It localises to the secreted. Its function is as follows. Binds with high affinity to muscular (alpha-1/CHRNA1) and neuronal (alpha-7/CHRNA7) nicotinic acetylcholine receptor (nAChR) and inhibits acetylcholine from binding to the receptor, thereby impairing neuromuscular and neuronal transmission. This is Long neurotoxin 7 from Naja sputatrix (Malayan spitting cobra).